We begin with the raw amino-acid sequence, 223 residues long: UPF0441 protein YgiB (223 aa).

Residues 178 to 195 are compositionally biased toward low complexity; it reads TVPKTAMAPKPATTTTVT. The tract at residues 178 to 223 is disordered; sequence TVPKTAMAPKPATTTTVTRGGFGESIAKQSTMQRSATGTSSRSMGG. The span at 204–223 shows a compositional bias: polar residues; the sequence is AKQSTMQRSATGTSSRSMGG.

This sequence belongs to the UPF0441 family.

The protein is UPF0441 protein YgiB of Shigella boydii serotype 4 (strain Sb227).